A 164-amino-acid chain; its full sequence is CB1 cannabinoid receptor-interacting protein 1 (164 aa).

Belongs to the CNRIP family. As to quaternary structure, interacts with the cannabinoid receptor CNR1 (via C-terminus). Does not interact with cannabinoid receptor CNR2.

In terms of biological role, suppresses cannabinoid receptor CNR1-mediated tonic inhibition of voltage-gated calcium channels. The chain is CB1 cannabinoid receptor-interacting protein 1 (Cnrip1) from Rattus norvegicus (Rat).